The primary structure comprises 301 residues: Ribonuclease Z (301 aa).

His60, His62, Asp64, His65, His137, Asp207, and His265 together coordinate Zn(2+). Asp64 functions as the Proton acceptor in the catalytic mechanism.

This sequence belongs to the RNase Z family. Homodimer. It depends on Zn(2+) as a cofactor.

The enzyme catalyses Endonucleolytic cleavage of RNA, removing extra 3' nucleotides from tRNA precursor, generating 3' termini of tRNAs. A 3'-hydroxy group is left at the tRNA terminus and a 5'-phosphoryl group is left at the trailer molecule.. In terms of biological role, zinc phosphodiesterase, which displays some tRNA 3'-processing endonuclease activity. Probably involved in tRNA maturation, by removing a 3'-trailer from precursor tRNA. This Exiguobacterium sp. (strain ATCC BAA-1283 / AT1b) protein is Ribonuclease Z.